A 291-amino-acid chain; its full sequence is Nucleotide-binding protein CMM_1747 (291 aa).

ATP is bound at residue 15 to 22 (GMSGAGRS). 66 to 69 (DVRG) lines the GTP pocket.

This sequence belongs to the RapZ-like family.

Its function is as follows. Displays ATPase and GTPase activities. The polypeptide is Nucleotide-binding protein CMM_1747 (Clavibacter michiganensis subsp. michiganensis (strain NCPPB 382)).